A 417-amino-acid chain; its full sequence is Serine hydroxymethyltransferase (417 aa).

(6S)-5,6,7,8-tetrahydrofolate-binding positions include Leu-116 and 120–122; that span reads GHL. The residue at position 225 (Lys-225) is an N6-(pyridoxal phosphate)lysine. A (6S)-5,6,7,8-tetrahydrofolate-binding site is contributed by 350 to 352; sequence SPF.

This sequence belongs to the SHMT family. Homodimer. It depends on pyridoxal 5'-phosphate as a cofactor.

It localises to the cytoplasm. It carries out the reaction (6R)-5,10-methylene-5,6,7,8-tetrahydrofolate + glycine + H2O = (6S)-5,6,7,8-tetrahydrofolate + L-serine. It participates in one-carbon metabolism; tetrahydrofolate interconversion. The protein operates within amino-acid biosynthesis; glycine biosynthesis; glycine from L-serine: step 1/1. In terms of biological role, catalyzes the reversible interconversion of serine and glycine with tetrahydrofolate (THF) serving as the one-carbon carrier. This reaction serves as the major source of one-carbon groups required for the biosynthesis of purines, thymidylate, methionine, and other important biomolecules. Also exhibits THF-independent aldolase activity toward beta-hydroxyamino acids, producing glycine and aldehydes, via a retro-aldol mechanism. This chain is Serine hydroxymethyltransferase, found in Ligilactobacillus salivarius (strain UCC118) (Lactobacillus salivarius).